We begin with the raw amino-acid sequence, 94 residues long: Late cornified envelope-like proline-rich protein 1 (94 aa).

2 disordered regions span residues 1-26 (MSSD…CEQK) and 47-94 (CPRE…PPPE). The segment covering 53–94 (PAPPKCPPCPSPSPSSCPPKPCAKPCPPKCPSSCPPPCPPPE) has biased composition (pro residues).

This sequence belongs to the cornifin (SPRR) family.

The polypeptide is Late cornified envelope-like proline-rich protein 1 (LELP1) (Macaca fascicularis (Crab-eating macaque)).